Reading from the N-terminus, the 251-residue chain is Uridylate kinase (251 aa).

19–22 (KLSG) lines the ATP pocket. Residue Gly61 coordinates UMP. Residues Gly62 and Arg66 each contribute to the ATP site. UMP is bound by residues Asp81 and 142–149 (TGNPYFTT). Residues Thr169, Tyr175, and Asp178 each contribute to the ATP site.

The protein belongs to the UMP kinase family. Homohexamer.

It localises to the cytoplasm. The enzyme catalyses UMP + ATP = UDP + ADP. The protein operates within pyrimidine metabolism; CTP biosynthesis via de novo pathway; UDP from UMP (UMPK route): step 1/1. Inhibited by UTP. In terms of biological role, catalyzes the reversible phosphorylation of UMP to UDP. The polypeptide is Uridylate kinase (Anaeromyxobacter dehalogenans (strain 2CP-C)).